The sequence spans 497 residues: MKSSTIPPMYAAIDLGSNSFHMLVVRHINGSVQTMAKIKRKVRLAAGLNENNTLSHEAMQRGWDCLSLFAERLQDIPVENIRIVGTATLRVASNVDIFLEKANQILGHNINVIEGEEEARMIYQGVAHTSGGNGRRLVVDIGGASTELIIGEGFEAQALTSLKMGCVTWLEGYFKDRALTQKNFDSAIAGAKETLAPILQQYTDLGWQTCVGASGTVQALQEIMLAQGMDEVITLAKLKRLQKQAMQYEHLEELDIDGLTLERALVFPSGLSILIAIFELLNIDSMTLAGGALREGLCYGMIDELQHDEVCQRTIKSTQQRYQLDVEYAQQVTDLSIQLVQQCGNDWLTEPQALPLLTAATQLHEIGMCIDYKKGGEHSAYLINALDLPGFTRAQKHLLGELLRRYREYFSAMPTQHAVSDISAQRMLRILRLAIILTHRRDVNLAPAVTLSEKNDVLSLSIDGTWLAANPLTRSELEIEADKQTNIGWDLVIDARD.

It belongs to the GppA/Ppx family. GppA subfamily.

The catalysed reaction is guanosine 3'-diphosphate 5'-triphosphate + H2O = guanosine 3',5'-bis(diphosphate) + phosphate + H(+). The protein operates within purine metabolism; ppGpp biosynthesis; ppGpp from GTP: step 2/2. Functionally, catalyzes the conversion of pppGpp to ppGpp. Guanosine pentaphosphate (pppGpp) is a cytoplasmic signaling molecule which together with ppGpp controls the 'stringent response', an adaptive process that allows bacteria to respond to amino acid starvation, resulting in the coordinated regulation of numerous cellular activities. The polypeptide is Guanosine-5'-triphosphate,3'-diphosphate pyrophosphatase (Aliivibrio fischeri (strain MJ11) (Vibrio fischeri)).